The chain runs to 507 residues: ATP synthase subunit alpha, chloroplastic (507 aa).

170-177 lines the ATP pocket; sequence GDRQTGKT.

Belongs to the ATPase alpha/beta chains family. In terms of assembly, F-type ATPases have 2 components, CF(1) - the catalytic core - and CF(0) - the membrane proton channel. CF(1) has five subunits: alpha(3), beta(3), gamma(1), delta(1), epsilon(1). CF(0) has four main subunits: a, b, b' and c.

Its subcellular location is the plastid. It is found in the chloroplast thylakoid membrane. It catalyses the reaction ATP + H2O + 4 H(+)(in) = ADP + phosphate + 5 H(+)(out). Functionally, produces ATP from ADP in the presence of a proton gradient across the membrane. The alpha chain is a regulatory subunit. This chain is ATP synthase subunit alpha, chloroplastic, found in Atropa belladonna (Belladonna).